The chain runs to 131 residues: Small ribosomal subunit protein bS6 (131 aa).

Residues alanine 99 to glutamate 131 form a disordered region. Positions lysine 104 to phenylalanine 116 are enriched in basic and acidic residues. Acidic residues predominate over residues threonine 120 to glutamate 131.

It belongs to the bacterial ribosomal protein bS6 family.

Binds together with bS18 to 16S ribosomal RNA. The chain is Small ribosomal subunit protein bS6 from Sodalis glossinidius (strain morsitans).